An 89-amino-acid chain; its full sequence is Small ribosomal subunit protein uS15 (89 aa).

Residues 1–25 (MSLDTTEKQQLINTHQTHGTDTGSA) form a disordered region. The segment covering 8–25 (KQQLINTHQTHGTDTGSA) has biased composition (polar residues).

The protein belongs to the universal ribosomal protein uS15 family. As to quaternary structure, part of the 30S ribosomal subunit. Forms a bridge to the 50S subunit in the 70S ribosome, contacting the 23S rRNA.

One of the primary rRNA binding proteins, it binds directly to 16S rRNA where it helps nucleate assembly of the platform of the 30S subunit by binding and bridging several RNA helices of the 16S rRNA. Its function is as follows. Forms an intersubunit bridge (bridge B4) with the 23S rRNA of the 50S subunit in the ribosome. The sequence is that of Small ribosomal subunit protein uS15 from Parasynechococcus marenigrum (strain WH8102).